A 341-amino-acid polypeptide reads, in one-letter code: S-adenosylmethionine:tRNA ribosyltransferase-isomerase (341 aa).

Belongs to the QueA family. As to quaternary structure, monomer.

It is found in the cytoplasm. The catalysed reaction is 7-aminomethyl-7-carbaguanosine(34) in tRNA + S-adenosyl-L-methionine = epoxyqueuosine(34) in tRNA + adenine + L-methionine + 2 H(+). It participates in tRNA modification; tRNA-queuosine biosynthesis. Transfers and isomerizes the ribose moiety from AdoMet to the 7-aminomethyl group of 7-deazaguanine (preQ1-tRNA) to give epoxyqueuosine (oQ-tRNA). The sequence is that of S-adenosylmethionine:tRNA ribosyltransferase-isomerase from Clostridium botulinum (strain Okra / Type B1).